Reading from the N-terminus, the 414-residue chain is GA-binding protein subunit beta-2 (414 aa).

ANK repeat units follow at residues 5–34 (DLGK…PFTT), 37–66 (LGTS…SRDA), 70–99 (VDRT…DVNA), 103–132 (LQMT…DVYA), and 136–166 (FDKS…QVNT). Ser-218 bears the Phosphoserine mark. The stretch at 310–362 (EEMKEGSERELLQQQLQEANRRAQEYRHQLLKKEQEAEQYRLRLEAMAQQQTN) forms a coiled coil.

In terms of assembly, heterotetramer of two alpha and two beta subunits. The C-terminal is necessary for the formation of a heterotetrameric GABP-alpha-2/beta-2 complex, and also facilitates homotypic dimerization. Interacts with ADGRB2. As to expression, high levels in thymus, spleen, kidney and intestine.

Its subcellular location is the nucleus. Functionally, transcription factor capable of interacting with purine rich repeats (GA repeats). Must associate with GABP-alpha to bind DNA. The chain is GA-binding protein subunit beta-2 (Gabpb2) from Mus musculus (Mouse).